The following is a 550-amino-acid chain: 65-kDa microtubule-associated protein 5 (550 aa).

Coiled coils occupy residues 46–174 (NKKV…QKVN) and 288–310 (IREA…KELV). The tract at residues 471-531 (QFREQKRLQG…PGRSVTSGGK (61 aa)) is disordered. Residues 502 to 511 (QSLNTDNVTK) show a composition bias toward polar residues.

It belongs to the MAP65/ASE1 family. Forms a dimer. Binds to MT, mostly with coaligned MT, both between parallel or antiparallel, forming thick bundles. Bundles polymerized MT via the formation of 25-nm crossbridges with cortical MT.

The protein localises to the nucleus. It is found in the cytoplasm. It localises to the cytoskeleton. The protein resides in the spindle. Its subcellular location is the phragmoplast. The protein localises to the cell cortex. It is found in the cell junction. It localises to the plasmodesma. Its function is as follows. Microtubule-associated protein that bundle and stabilize adjacent microtubules (MT) of the cell cortex. Confers MT resistance to the drug oryzalin. Promotes the formation of a planar network of antiparallel microtubules. In Arabidopsis thaliana (Mouse-ear cress), this protein is 65-kDa microtubule-associated protein 5 (MAP65-5).